Here is a 265-residue protein sequence, read N- to C-terminus: Deoxyribose-phosphate aldolase 2 (265 aa).

Residue Asp-108 is the Proton donor/acceptor of the active site. The active-site Schiff-base intermediate with acetaldehyde is Lys-173. Lys-207 (proton donor/acceptor) is an active-site residue.

It belongs to the DeoC/FbaB aldolase family. DeoC type 2 subfamily.

Its subcellular location is the cytoplasm. It carries out the reaction 2-deoxy-D-ribose 5-phosphate = D-glyceraldehyde 3-phosphate + acetaldehyde. Its pathway is carbohydrate degradation; 2-deoxy-D-ribose 1-phosphate degradation; D-glyceraldehyde 3-phosphate and acetaldehyde from 2-deoxy-alpha-D-ribose 1-phosphate: step 2/2. In terms of biological role, catalyzes a reversible aldol reaction between acetaldehyde and D-glyceraldehyde 3-phosphate to generate 2-deoxy-D-ribose 5-phosphate. The polypeptide is Deoxyribose-phosphate aldolase 2 (deoC2) (Yersinia pestis).